The sequence spans 182 residues: Isopentenyl-diphosphate Delta-isomerase (182 aa).

Residues His25 and His32 each coordinate Mn(2+). The region spanning 30 to 164 (LLHLAFSSWL…PWAFSPWMVM (135 aa)) is the Nudix hydrolase domain. The active site involves Cys67. His69 contributes to the Mn(2+) binding site. A Mg(2+)-binding site is contributed by Glu87. The Mn(2+) site is built by Glu114 and Glu116. Glu116 is an active-site residue.

It belongs to the IPP isomerase type 1 family. As to quaternary structure, homodimer. Mg(2+) serves as cofactor. Requires Mn(2+) as cofactor.

The protein resides in the cytoplasm. The enzyme catalyses isopentenyl diphosphate = dimethylallyl diphosphate. The protein operates within isoprenoid biosynthesis; dimethylallyl diphosphate biosynthesis; dimethylallyl diphosphate from isopentenyl diphosphate: step 1/1. In terms of biological role, catalyzes the 1,3-allylic rearrangement of the homoallylic substrate isopentenyl (IPP) to its highly electrophilic allylic isomer, dimethylallyl diphosphate (DMAPP). This is Isopentenyl-diphosphate Delta-isomerase from Shigella boydii serotype 18 (strain CDC 3083-94 / BS512).